The chain runs to 380 residues: SAM and SH3 domain-containing protein 3 (380 aa).

A disordered region spans residues 1–76 (MLRRKPSNAS…KSGKKLGKKW (76 aa)). Low complexity predominate over residues 22–41 (LQRSSSFKDFAKSKPSSPVV). Residues S27, S34, and S42 each carry the phosphoserine modification. The residue at position 61 (T61) is a Phosphothreonine. Residue S97 is modified to Phosphoserine. Disordered stretches follow at residues 98–174 (EEMA…TGPF), 237–256 (VGHA…KPKT), and 318–380 (TGSE…AGAP). T103 is modified (phosphothreonine). Phosphoserine is present on S110. T112 is modified (phosphothreonine). S113 carries the post-translational modification Phosphoserine. Position 116 is a phosphotyrosine (Y116). Residue S120 is modified to Phosphoserine. The segment covering 143 to 152 (RQASTGSELC) has biased composition (polar residues). The segment covering 153 to 164 (SPSPGSGSFGEE) has biased composition (low complexity). The 62-residue stretch at 173-234 (PFCGRARVHT…KFIYVDVLPE (62 aa)) folds into the SH3 domain. A compositionally biased stretch (basic residues) spans 241-255 (RPSRRQSKGKRPKPK). An SAM domain is found at 252–316 (PKPKTLHELL…LTAAELLLDY (65 aa)). The residue at position 318 (T318) is a Phosphothreonine. Positions 318–327 (TGSEEAEEGA) are enriched in acidic residues. S320 carries the phosphoserine modification.

In terms of biological role, may function as a signaling adapter protein in lymphocytes. The protein is SAM and SH3 domain-containing protein 3 (SASH3) of Homo sapiens (Human).